Reading from the N-terminus, the 519-residue chain is Pleckstrin homology domain-containing family A member 8 (519 aa).

A PH domain is found at 1–93; it reads MEGVLYKWTN…WLVALGSAKA (93 aa). Thr139 is subject to Phosphothreonine. A Phosphoserine modification is found at Ser145. The residue at position 153 (Thr153) is a Phosphothreonine. The interval 275-302 is disordered; sequence GEENLESHDKDPAQPGSDSVCSPESPWE. The segment at 330 to 473 is glycolipid transfer protein homology domain; the sequence is IPTEAFLASC…EDFVAALTIK (144 aa).

In terms of assembly, homodimer. Interacts with ARF1; the interaction together with phosphatidylinositol 4-phosphate binding is required for FAPP2 GlcCer transfer ability.

Its subcellular location is the golgi apparatus. It is found in the trans-Golgi network membrane. The protein localises to the membrane. Functionally, cargo transport protein that is required for apical transport from the trans-Golgi network (TGN). Transports AQP2 from the trans-Golgi network (TGN) to sites of AQP2 phosphorylation. Mediates the non-vesicular transport of glucosylceramide (GlcCer) from the trans-Golgi network (TGN) to the plasma membrane and plays a pivotal role in the synthesis of complex glycosphingolipids. Binding of both phosphatidylinositol 4-phosphate (PIP) and ARF1 are essential for the GlcCer transfer ability. Also required for primary cilium formation, possibly by being involved in the transport of raft lipids to the apical membrane, and for membrane tubulation. This is Pleckstrin homology domain-containing family A member 8 (Plekha8) from Mus musculus (Mouse).